Here is an 86-residue protein sequence, read N- to C-terminus: Small ribosomal subunit protein bS20 (86 aa).

The disordered stretch occupies residues Met1–Lys25. Residues Lys12 to Lys22 are compositionally biased toward basic and acidic residues.

The protein belongs to the bacterial ribosomal protein bS20 family.

Binds directly to 16S ribosomal RNA. This chain is Small ribosomal subunit protein bS20, found in Nocardioides sp. (strain ATCC BAA-499 / JS614).